The primary structure comprises 353 residues: NADH-quinone oxidoreductase subunit H (353 aa).

Helical transmembrane passes span 8-28, 75-95, 108-128, 148-168, 178-198, 229-249, 258-278, 297-317, and 319-339; these read LLVY…LFIW, GVFW…FAAI, IGIL…FMAG, VSYE…TGSL, SVPF…AAMA, LFYL…TTLF, LHPV…IIWV, FLLP…LAAP, and MNTA…ILLF.

Belongs to the complex I subunit 1 family. As to quaternary structure, NDH-1 is composed of 14 different subunits. Subunits NuoA, H, J, K, L, M, N constitute the membrane sector of the complex.

The protein resides in the cell membrane. It catalyses the reaction a quinone + NADH + 5 H(+)(in) = a quinol + NAD(+) + 4 H(+)(out). In terms of biological role, NDH-1 shuttles electrons from NADH, via FMN and iron-sulfur (Fe-S) centers, to quinones in the respiratory chain. The immediate electron acceptor for the enzyme in this species is believed to be ubiquinone. Couples the redox reaction to proton translocation (for every two electrons transferred, four hydrogen ions are translocated across the cytoplasmic membrane), and thus conserves the redox energy in a proton gradient. This subunit may bind ubiquinone. The sequence is that of NADH-quinone oxidoreductase subunit H from Dehalococcoides mccartyi (strain ATCC BAA-2266 / KCTC 15142 / 195) (Dehalococcoides ethenogenes (strain 195)).